We begin with the raw amino-acid sequence, 247 residues long: ATP synthase subunit C lysine N-methyltransferase (247 aa).

N-acetylmethionine is present on Met-1. A compositionally biased stretch (basic and acidic residues) spans 1–12 (MERVGTPEEERQ). The tract at residues 1-25 (MERVGTPEEERQAGPVLPTSLESDS) is disordered. A helical transmembrane segment spans residues 34 to 54 (LITGVVGGALLTVYAVATPFI). The tract at residues 51 to 85 (TPFITPALRKVCLPFVPATSKQVENVVRMLRHRRG) is required for mitochondrial location. The tract at residues 209–247 (QRGRGGRPNQEWVGQKNLSETAGLQASSSETRSKLLDVE) is disordered. Residues 224-238 (KNLSETAGLQASSSE) are compositionally biased toward polar residues.

Belongs to the ANT/ATPSC lysine N-methyltransferase family. In terms of tissue distribution, ubiquitously expressed.

Its subcellular location is the mitochondrion membrane. The catalysed reaction is L-lysyl-[protein] + 3 S-adenosyl-L-methionine = N(6),N(6),N(6)-trimethyl-L-lysyl-[protein] + 3 S-adenosyl-L-homocysteine + 3 H(+). Mitochondrial protein-lysine N-methyltransferase that trimethylates ATP synthase subunit C, ATP5MC1 and ATP5MC2. Trimethylation is required for proper incorporation of the C subunit into the ATP synthase complex and mitochondrial respiration. Promotes chronic pain. Involved in persistent inflammatory and neuropathic pain: methyltransferase activity in the mitochondria of sensory neurons promotes chronic pain via a pathway that depends on the production of reactive oxygen species (ROS) and on the engagement of spinal cord microglia. This chain is ATP synthase subunit C lysine N-methyltransferase, found in Mus musculus (Mouse).